Here is a 181-residue protein sequence, read N- to C-terminus: Transcription termination/antitermination protein NusG (181 aa).

The region spanning proline 130–leucine 158 is the KOW domain.

It belongs to the NusG family. Monomer. Interacts with the transcription termination factor Rho and with RNA polymerase.

Participates in transcription elongation, termination and antitermination. In the absence of Rho, increases the rate of transcription elongation by the RNA polymerase (RNAP), probably by partially suppressing pausing. In the presence of Rho, modulates most Rho-dependent termination events by interacting with the RNAP to render the complex more susceptible to the termination activity of Rho. May be required to overcome a kinetic limitation of Rho to function at certain terminators. Also involved in ribosomal RNA transcriptional antitermination. This Buchnera aphidicola subsp. Baizongia pistaciae (strain Bp) protein is Transcription termination/antitermination protein NusG.